Here is a 122-residue protein sequence, read N- to C-terminus: UPF0344 protein BPUM_1008 (122 aa).

Transmembrane regions (helical) follow at residues 5–25, 33–53, 60–80, and 93–113; these read LHIT…ALAG, IVHM…VELY, IPGF…VIGF, and SVTG…LLGL.

Belongs to the UPF0344 family.

The protein resides in the cell membrane. This Bacillus pumilus (strain SAFR-032) protein is UPF0344 protein BPUM_1008.